Here is a 1588-residue protein sequence, read N- to C-terminus: Pentafunctional AROM polypeptide (1588 aa).

The segment at 1 to 392 (MVQLAKVPIL…YGDSAQFVSD (392 aa)) is 3-dehydroquinate synthase. Residues 43 to 45 (DTN), 78 to 81 (ETSK), 109 to 111 (GGV), and Asp114 contribute to the NAD(+) site. Position 125 (Arg125) interacts with 7-phospho-2-dehydro-3-deoxy-D-arabino-heptonate. NAD(+) is bound at residue 134-135 (TS). 7-phospho-2-dehydro-3-deoxy-D-arabino-heptonate-binding residues include Asp141 and Lys147. Lys156 provides a ligand contact to NAD(+). Asn157 contacts 7-phospho-2-dehydro-3-deoxy-D-arabino-heptonate. NAD(+) contacts are provided by residues 174–177 (WLET) and Asn185. Glu189 lines the Zn(2+) pocket. Residues 189 to 192 (EVIK) and Lys258 contribute to the 7-phospho-2-dehydro-3-deoxy-D-arabino-heptonate site. Catalysis depends on Glu268, which acts as the Proton acceptor; for 3-dehydroquinate synthase activity. Residues 272-276 (RNLLN) and His279 each bind 7-phospho-2-dehydro-3-deoxy-D-arabino-heptonate. His279 serves as a coordination point for Zn(2+). His283 (proton acceptor; for 3-dehydroquinate synthase activity) is an active-site residue. His295 and Lys364 together coordinate 7-phospho-2-dehydro-3-deoxy-D-arabino-heptonate. A Zn(2+)-binding site is contributed by His295. The interval 405 to 871 (VYPFKDIPAD…WDVLHSELGA (467 aa)) is EPSP synthase. The For EPSP synthase activity role is filled by Cys853. The interval 890–1080 (SVVIIGMRAA…IPSGRSAFVC (191 aa)) is shikimate kinase. 895-902 (GMRAAGKT) is an ATP binding site. The segment at 1081–1293 (LTFDDLTEQT…AAPGQLTVAQ (213 aa)) is 3-dehydroquinase. His1198 acts as the Proton acceptor; for 3-dehydroquinate dehydratase activity in catalysis. Catalysis depends on Lys1227, which acts as the Schiff-base intermediate with substrate; for 3-dehydroquinate dehydratase activity. Residues 1306-1588 (PKELFVVGKP…KAIFDAVTKE (283 aa)) are shikimate dehydrogenase.

It in the N-terminal section; belongs to the sugar phosphate cyclases superfamily. Dehydroquinate synthase family. The protein in the 2nd section; belongs to the EPSP synthase family. This sequence in the 3rd section; belongs to the shikimate kinase family. In the 4th section; belongs to the type-I 3-dehydroquinase family. It in the C-terminal section; belongs to the shikimate dehydrogenase family. Homodimer. Zn(2+) serves as cofactor.

Its subcellular location is the cytoplasm. It catalyses the reaction 7-phospho-2-dehydro-3-deoxy-D-arabino-heptonate = 3-dehydroquinate + phosphate. It carries out the reaction 3-dehydroquinate = 3-dehydroshikimate + H2O. The enzyme catalyses shikimate + NADP(+) = 3-dehydroshikimate + NADPH + H(+). The catalysed reaction is shikimate + ATP = 3-phosphoshikimate + ADP + H(+). It catalyses the reaction 3-phosphoshikimate + phosphoenolpyruvate = 5-O-(1-carboxyvinyl)-3-phosphoshikimate + phosphate. It functions in the pathway metabolic intermediate biosynthesis; chorismate biosynthesis; chorismate from D-erythrose 4-phosphate and phosphoenolpyruvate: step 2/7. The protein operates within metabolic intermediate biosynthesis; chorismate biosynthesis; chorismate from D-erythrose 4-phosphate and phosphoenolpyruvate: step 3/7. It participates in metabolic intermediate biosynthesis; chorismate biosynthesis; chorismate from D-erythrose 4-phosphate and phosphoenolpyruvate: step 4/7. Its pathway is metabolic intermediate biosynthesis; chorismate biosynthesis; chorismate from D-erythrose 4-phosphate and phosphoenolpyruvate: step 5/7. It functions in the pathway metabolic intermediate biosynthesis; chorismate biosynthesis; chorismate from D-erythrose 4-phosphate and phosphoenolpyruvate: step 6/7. Functionally, the AROM polypeptide catalyzes 5 consecutive enzymatic reactions in prechorismate polyaromatic amino acid biosynthesis. This chain is Pentafunctional AROM polypeptide, found in Saccharomyces cerevisiae (strain Lalvin EC1118 / Prise de mousse) (Baker's yeast).